Consider the following 82-residue polypeptide: Small ribosomal subunit protein bS18 (82 aa).

A disordered region spans residues 1-25 (MTEMNQTAIRRPFHRRRKTCPFSGT).

The protein belongs to the bacterial ribosomal protein bS18 family. In terms of assembly, part of the 30S ribosomal subunit. Forms a tight heterodimer with protein bS6.

Binds as a heterodimer with protein bS6 to the central domain of the 16S rRNA, where it helps stabilize the platform of the 30S subunit. In Bartonella henselae (strain ATCC 49882 / DSM 28221 / CCUG 30454 / Houston 1) (Rochalimaea henselae), this protein is Small ribosomal subunit protein bS18.